A 218-amino-acid polypeptide reads, in one-letter code: Probable transaldolase (218 aa).

Residue Lys-83 is the Schiff-base intermediate with substrate of the active site.

The protein belongs to the transaldolase family. Type 3B subfamily.

It is found in the cytoplasm. It catalyses the reaction D-sedoheptulose 7-phosphate + D-glyceraldehyde 3-phosphate = D-erythrose 4-phosphate + beta-D-fructose 6-phosphate. Its pathway is carbohydrate degradation; pentose phosphate pathway; D-glyceraldehyde 3-phosphate and beta-D-fructose 6-phosphate from D-ribose 5-phosphate and D-xylulose 5-phosphate (non-oxidative stage): step 2/3. In terms of biological role, transaldolase is important for the balance of metabolites in the pentose-phosphate pathway. The chain is Probable transaldolase from Thermotoga petrophila (strain ATCC BAA-488 / DSM 13995 / JCM 10881 / RKU-1).